The following is a 71-amino-acid chain: SRY-related protein LG27 (71 aa).

Residues 1 to 68 constitute a DNA-binding region (HMG box); that stretch reads VKRPMNAFMV…KHMADYPNYK (68 aa).

The protein localises to the nucleus. This is SRY-related protein LG27 from Eublepharis macularius (Leopard gecko).